We begin with the raw amino-acid sequence, 115 residues long: NADH-ubiquinone oxidoreductase chain 3 (115 aa).

3 consecutive transmembrane segments (helical) span residues 4 to 24, 55 to 75, and 86 to 106; these read IMVISVNIILSSTLILVAFWL, FFLVAITFLLFDLEIALLLPI, and TMMLTAFILVSILALGLAYEW.

This sequence belongs to the complex I subunit 3 family. As to quaternary structure, core subunit of respiratory chain NADH dehydrogenase (Complex I) which is composed of 45 different subunits. Interacts with TMEM186. Interacts with TMEM242.

It localises to the mitochondrion inner membrane. It carries out the reaction a ubiquinone + NADH + 5 H(+)(in) = a ubiquinol + NAD(+) + 4 H(+)(out). Core subunit of the mitochondrial membrane respiratory chain NADH dehydrogenase (Complex I) which catalyzes electron transfer from NADH through the respiratory chain, using ubiquinone as an electron acceptor. Essential for the catalytic activity of complex I. In Baiomys taylori (Northern pygmy mouse), this protein is NADH-ubiquinone oxidoreductase chain 3.